A 297-amino-acid polypeptide reads, in one-letter code: Manganese efflux system protein MneP (297 aa).

6 consecutive transmembrane segments (helical) span residues 12-32 (VALI…FFGL), 43-63 (GIHS…IGIS), 85-105 (IVGI…ILSF), 111-131 (VPQY…EILY), 155-175 (GDIV…IGNS), and 177-197 (GWSY…YLIF).

It belongs to the cation diffusion facilitator (CDF) transporter (TC 2.A.4) family.

It localises to the cell membrane. Functionally, primary efflux pump for manganese. May prevent manganese intoxication. This is Manganese efflux system protein MneP from Bacillus subtilis (strain 168).